Reading from the N-terminus, the 276-residue chain is Transmembrane protein 53 (276 aa).

The helical transmembrane segment at 170 to 190 (LLLLAAFALVVILFHFLLAPF) threads the bilayer.

Belongs to the TMEM53 family. As to expression, expressed in liver (at protein level).

The protein resides in the nucleus outer membrane. In terms of biological role, negatively regulates bone morphogenetic protein (BMP) signaling in osteoblast lineage cells by blocking cytoplasm-nucleus translocation of phosphorylated SMAD1/5/9 proteins. The protein is Transmembrane protein 53 (Tmem53) of Mus musculus (Mouse).